We begin with the raw amino-acid sequence, 533 residues long: NEDD8-activating enzyme E1 regulatory subunit (533 aa).

The interval D330–N343 is interaction with uba3.

This sequence belongs to the ubiquitin-activating E1 family. ULA1 subfamily. As to quaternary structure, heterodimer of uba3 and nae1. The complex binds nedd8 and ube2m.

Its pathway is protein modification; protein neddylation. Its function is as follows. Regulatory subunit of the dimeric uba3-nae1 E1 enzyme. E1 activates nedd8 by first adenylating its C-terminal glycine residue with ATP, thereafter linking this residue to the side chain of the catalytic cysteine, yielding a nedd8-uba3 thioester and free AMP. E1 finally transfers nedd8 to the catalytic cysteine of ube2m. The covalent attachment of nedd8 to target proteins is known as 'neddylation' and the process is involved in the regulation of cell growth, viability and development. This is NEDD8-activating enzyme E1 regulatory subunit (nae1) from Xenopus laevis (African clawed frog).